A 186-amino-acid polypeptide reads, in one-letter code: uncharacterized protein (186 aa).

The protein belongs to the MG032/MG096/MG288 family.

This is an uncharacterized protein from Mycoplasma pneumoniae (strain ATCC 29342 / M129 / Subtype 1) (Mycoplasmoides pneumoniae).